Reading from the N-terminus, the 153-residue chain is Nucleoside diphosphate kinase (153 aa).

6 residues coordinate ATP: Lys-12, Phe-60, Arg-88, Thr-94, Arg-105, and Asn-115. The active-site Pros-phosphohistidine intermediate is the His-118.

This sequence belongs to the NDK family. Mg(2+) serves as cofactor.

Its subcellular location is the cytoplasm. The catalysed reaction is a 2'-deoxyribonucleoside 5'-diphosphate + ATP = a 2'-deoxyribonucleoside 5'-triphosphate + ADP. It carries out the reaction a ribonucleoside 5'-diphosphate + ATP = a ribonucleoside 5'-triphosphate + ADP. In terms of biological role, major role in the synthesis of nucleoside triphosphates other than ATP. The ATP gamma phosphate is transferred to the NDP beta phosphate via a ping-pong mechanism, using a phosphorylated active-site intermediate. The chain is Nucleoside diphosphate kinase from Natronomonas pharaonis (strain ATCC 35678 / DSM 2160 / CIP 103997 / JCM 8858 / NBRC 14720 / NCIMB 2260 / Gabara) (Halobacterium pharaonis).